A 449-amino-acid chain; its full sequence is Tripartite motif-containing protein 64B (449 aa).

The segment at 15–56 (CCICVNYFIDPVTIDCGHSFCRPCLCLCSEEGRAPMRCPSCR) adopts an RING-type zinc-finger fold. The B box-type zinc-finger motif lies at 87–128 (SSDNICVLHEETKELFCEADKRLLCGPCSESPEHMAHSHSPI). Residues Cys-92, His-95, Cys-114, and His-120 each contribute to the Zn(2+) site. The stretch at 189 to 225 (LDEEEQRHLQALEREAEELFQQLQDSQVRMTQHLERM) forms a coiled coil. One can recognise a B30.2/SPRY domain in the interval 268 to 449 (ELTSWCITGV…LRPFFCFGCT (182 aa)).

This sequence belongs to the TRIM/RBCC family.

The protein is Tripartite motif-containing protein 64B (TRIM64B) of Homo sapiens (Human).